Consider the following 1124-residue polypeptide: uncharacterized protein (1124 aa).

Positions 1 to 28 are cleaved as a signal peptide; sequence MALFPRSILIALVLSFVLNLGLVTKIHA. Helical transmembrane passes span 332-352, 359-379, 393-413, 495-515, 522-542, 555-575, and 700-720; these read IVTAFLTLYVMFFGFKLLLAG, EYINFILKIIFVTYFSIGINI, MIQWAFPFLLNGINGLASWVM, MLVSLALSYPLLVISVAAFMV, MISIVILGILAPLFVPMFLFA, MISFLLQPMVVVTFMITMFAV, and IKNILLALVTACFTLYLMYNF.

The protein belongs to the TrbL/VirB6 family.

Its subcellular location is the cell membrane. This is an uncharacterized protein from Rickettsia prowazekii (strain Madrid E).